A 227-amino-acid polypeptide reads, in one-letter code: Lipoprotein-releasing system ATP-binding protein LolD (227 aa).

The ABC transporter domain maps to Leu-6 to Glu-227. ATP is bound at residue Gly-42–Ser-49.

It belongs to the ABC transporter superfamily. Lipoprotein translocase (TC 3.A.1.125) family. In terms of assembly, the complex is composed of two ATP-binding proteins (LolD) and two transmembrane proteins (LolC and LolE).

It localises to the cell inner membrane. Its function is as follows. Part of the ABC transporter complex LolCDE involved in the translocation of mature outer membrane-directed lipoproteins, from the inner membrane to the periplasmic chaperone, LolA. Responsible for the formation of the LolA-lipoprotein complex in an ATP-dependent manner. The chain is Lipoprotein-releasing system ATP-binding protein LolD from Legionella pneumophila (strain Lens).